Reading from the N-terminus, the 475-residue chain is Ribulose bisphosphate carboxylase large chain (475 aa).

A propeptide spanning residues 1–2 (MS) is cleaved from the precursor. Proline 3 is subject to N-acetylproline. N6,N6,N6-trimethyllysine is present on lysine 14. Asparagine 123 and threonine 173 together coordinate substrate. Catalysis depends on lysine 175, which acts as the Proton acceptor. Lysine 177 is a binding site for substrate. Mg(2+)-binding residues include lysine 201, aspartate 203, and glutamate 204. Lysine 201 carries the N6-carboxylysine modification. Histidine 294 functions as the Proton acceptor in the catalytic mechanism. Positions 295, 327, and 379 each coordinate substrate.

This sequence belongs to the RuBisCO large chain family. Type I subfamily. In terms of assembly, heterohexadecamer of 8 large chains and 8 small chains; disulfide-linked. The disulfide link is formed within the large subunit homodimers. Mg(2+) is required as a cofactor. In terms of processing, the disulfide bond which can form in the large chain dimeric partners within the hexadecamer appears to be associated with oxidative stress and protein turnover.

It localises to the plastid. The protein resides in the chloroplast. It catalyses the reaction 2 (2R)-3-phosphoglycerate + 2 H(+) = D-ribulose 1,5-bisphosphate + CO2 + H2O. The catalysed reaction is D-ribulose 1,5-bisphosphate + O2 = 2-phosphoglycolate + (2R)-3-phosphoglycerate + 2 H(+). Functionally, ruBisCO catalyzes two reactions: the carboxylation of D-ribulose 1,5-bisphosphate, the primary event in carbon dioxide fixation, as well as the oxidative fragmentation of the pentose substrate in the photorespiration process. Both reactions occur simultaneously and in competition at the same active site. This Anthoceros angustus (Hornwort) protein is Ribulose bisphosphate carboxylase large chain.